Consider the following 213-residue polypeptide: MNISLRPAIAAPSPLDSFLTRHRIGIWRVVVSVVLIALITGHSQWDDTWISAALLTVGMLGVTMATVGRLWCALYISGRKSTELVTTGPYSMCRHPLYVCNFVGIVGLGAMTESITLAAILALAFALMYPAVIRSEDHLLSRNFPEFDDYARRTPAFFPRLSLFRSESTYLVHVGSFQRNLADSVWFLGMTIVVNAVELARHAKWLPTFVLLP.

A run of 4 helical transmembrane segments spans residues 24–44 (IGIW…GHSQ), 48–68 (TWIS…ATVG), 113–133 (ESIT…PAVI), and 180–200 (NLAD…VELA).

It to A.eutrophus CzcN.

Its subcellular location is the cell inner membrane. Component of the NCC cation-efflux system that confers resistance to nickel, cobalt and cadmium. Appears to be involved in metal specificity but affects only nickel resistance. May be involved in nickel transport. This Alcaligenes xylosoxydans xylosoxydans (Achromobacter xylosoxidans) protein is Nickel-cobalt-cadmium resistance protein NccN (nccN).